Reading from the N-terminus, the 388-residue chain is Beta-1,4-galactosyltransferase 5 (388 aa).

The Cytoplasmic segment spans residues 1 to 14; the sequence is MRARRGLLRLPRRS. The chain crosses the membrane as a helical; Signal-anchor for type II membrane protein span at residues 15–35; that stretch reads LLAALFFFSLSSSLLYFVYVA. At 36 to 388 the chain is on the lumenal side; that stretch reads PGIVNTYLFM…TPELAQVTEY (353 aa). N-linked (GlcNAc...) asparagine glycans are attached at residues N77, N81, N90, and N128. A disulfide bridge connects residues C114 and C158. UDP-alpha-D-galactose contacts are provided by residues 169–173, 208–210, 235–236, Y264, and W296; these read PFRNR, FNR, and VD. Cysteines 229 and 248 form a disulfide. D236 contacts Mn(2+). Residue 298–301 participates in N-acetyl-D-glucosamine binding; that stretch reads GEDD. H329 contacts Mn(2+). 329-330 lines the UDP-alpha-D-galactose pocket; the sequence is HH. R340 serves as a coordination point for N-acetyl-D-glucosamine. N-linked (GlcNAc...) asparagine glycans are attached at residues N360, N364, and N373.

It belongs to the glycosyltransferase 7 family. It depends on Mn(2+) as a cofactor. In terms of tissue distribution, highest levels in heart, brain, liver and kidney with lower levels in spleen, lung and testis.

It is found in the golgi apparatus. It localises to the golgi stack membrane. The catalysed reaction is a beta-D-glucosyl-(1&lt;-&gt;1')-N-acylsphing-4-enine + UDP-alpha-D-galactose = a beta-D-Gal-(1-&gt;4)-beta-D-Glc-(1&lt;-&gt;1)-Cer(d18:1(4E)) + UDP + H(+). Its pathway is protein modification; protein glycosylation. It participates in sphingolipid metabolism. Its function is as follows. Catalyzes the synthesis of lactosylceramide (LacCer) via the transfer of galactose from UDP-galactose to glucosylceramide (GlcCer). LacCer is the starting point in the biosynthesis of all gangliosides (membrane-bound glycosphingolipids) which play pivotal roles in the CNS including neuronal maturation and axonal and myelin formation. Plays a role in the glycosylation of BMPR1A and regulation of its protein stability. Essential for extraembryonic development during early embryogenesis. This Mus musculus (Mouse) protein is Beta-1,4-galactosyltransferase 5.